We begin with the raw amino-acid sequence, 250 residues long: Acetoacetate decarboxylase 1 (250 aa).

The active-site Schiff-base intermediate with acetoacetate is the lysine 120.

Belongs to the ADC family.

The enzyme catalyses acetoacetate + H(+) = acetone + CO2. In terms of biological role, catalyzes the conversion of acetoacetate to acetone and carbon dioxide. The protein is Acetoacetate decarboxylase 1 of Bradyrhizobium diazoefficiens (strain JCM 10833 / BCRC 13528 / IAM 13628 / NBRC 14792 / USDA 110).